A 417-amino-acid polypeptide reads, in one-letter code: NADH-quinone oxidoreductase subunit D (417 aa).

It belongs to the complex I 49 kDa subunit family. In terms of assembly, NDH-1 is composed of 14 different subunits. Subunits NuoB, C, D, E, F, and G constitute the peripheral sector of the complex.

The protein resides in the cell inner membrane. It catalyses the reaction a quinone + NADH + 5 H(+)(in) = a quinol + NAD(+) + 4 H(+)(out). NDH-1 shuttles electrons from NADH, via FMN and iron-sulfur (Fe-S) centers, to quinones in the respiratory chain. The immediate electron acceptor for the enzyme in this species is believed to be ubiquinone. Couples the redox reaction to proton translocation (for every two electrons transferred, four hydrogen ions are translocated across the cytoplasmic membrane), and thus conserves the redox energy in a proton gradient. The polypeptide is NADH-quinone oxidoreductase subunit D (Burkholderia mallei (strain NCTC 10247)).